The following is a 1273-amino-acid chain: DNA-directed RNA polymerase subunit beta (1273 aa).

It belongs to the RNA polymerase beta chain family. The RNAP catalytic core consists of 2 alpha, 1 beta, 1 beta' and 1 omega subunit. When a sigma factor is associated with the core the holoenzyme is formed, which can initiate transcription.

The enzyme catalyses RNA(n) + a ribonucleoside 5'-triphosphate = RNA(n+1) + diphosphate. DNA-dependent RNA polymerase catalyzes the transcription of DNA into RNA using the four ribonucleoside triphosphates as substrates. The protein is DNA-directed RNA polymerase subunit beta of Aster yellows witches'-broom phytoplasma (strain AYWB).